The primary structure comprises 682 residues: Potassium-transporting ATPase ATP-binding subunit (682 aa).

4 helical membrane-spanning segments follow: residues 34–54 (PVMFVVWAGSVLTTLLTLAMV), 58–78 (IAGSALFTGIISLWLWFTVLF), 219–239 (IALTILLIALTIVFLLATATL), and 254–274 (VLVALLVCLIPTTIGGLLSAI). Residue Asp-307 is the 4-aspartylphosphate intermediate of the active site. Residues Asp-344, Glu-348, 377 to 384 (FTAQSRMS), and Lys-395 contribute to the ATP site. The Mg(2+) site is built by Asp-518 and Asp-522. Transmembrane regions (helical) follow at residues 588 to 608 (FAIIPAAFAATYPQLNALNVM), 616 to 636 (AILSAVIFNALIIIFLIPLAL), and 662 to 682 (LVVPFIGIKVIDVLLTLLGLA).

Belongs to the cation transport ATPase (P-type) (TC 3.A.3) family. Type IA subfamily. As to quaternary structure, the system is composed of three essential subunits: KdpA, KdpB and KdpC.

It localises to the cell inner membrane. It catalyses the reaction K(+)(out) + ATP + H2O = K(+)(in) + ADP + phosphate + H(+). Functionally, part of the high-affinity ATP-driven potassium transport (or Kdp) system, which catalyzes the hydrolysis of ATP coupled with the electrogenic transport of potassium into the cytoplasm. This subunit is responsible for energy coupling to the transport system and for the release of the potassium ions to the cytoplasm. This chain is Potassium-transporting ATPase ATP-binding subunit, found in Salmonella newport (strain SL254).